The following is a 484-amino-acid chain: 3-isopropylmalate dehydratase large subunit (484 aa).

3 residues coordinate [4Fe-4S] cluster: cysteine 352, cysteine 412, and cysteine 415. The disordered stretch occupies residues 463–484 (TLSSPSDLDPAPASAAIRTDAA). Residues 464–478 (LSSPSDLDPAPASAA) are compositionally biased toward low complexity.

This sequence belongs to the aconitase/IPM isomerase family. LeuC type 1 subfamily. In terms of assembly, heterodimer of LeuC and LeuD. Requires [4Fe-4S] cluster as cofactor.

It carries out the reaction (2R,3S)-3-isopropylmalate = (2S)-2-isopropylmalate. Its pathway is amino-acid biosynthesis; L-leucine biosynthesis; L-leucine from 3-methyl-2-oxobutanoate: step 2/4. Its function is as follows. Catalyzes the isomerization between 2-isopropylmalate and 3-isopropylmalate, via the formation of 2-isopropylmaleate. The sequence is that of 3-isopropylmalate dehydratase large subunit from Pseudarthrobacter chlorophenolicus (strain ATCC 700700 / DSM 12829 / CIP 107037 / JCM 12360 / KCTC 9906 / NCIMB 13794 / A6) (Arthrobacter chlorophenolicus).